A 169-amino-acid chain; its full sequence is NAD(P)H-quinone oxidoreductase subunit J, chloroplastic (169 aa).

It belongs to the complex I 30 kDa subunit family. NDH is composed of at least 16 different subunits, 5 of which are encoded in the nucleus.

The protein resides in the plastid. Its subcellular location is the chloroplast thylakoid membrane. The enzyme catalyses a plastoquinone + NADH + (n+1) H(+)(in) = a plastoquinol + NAD(+) + n H(+)(out). The catalysed reaction is a plastoquinone + NADPH + (n+1) H(+)(in) = a plastoquinol + NADP(+) + n H(+)(out). Functionally, NDH shuttles electrons from NAD(P)H:plastoquinone, via FMN and iron-sulfur (Fe-S) centers, to quinones in the photosynthetic chain and possibly in a chloroplast respiratory chain. The immediate electron acceptor for the enzyme in this species is believed to be plastoquinone. Couples the redox reaction to proton translocation, and thus conserves the redox energy in a proton gradient. The sequence is that of NAD(P)H-quinone oxidoreductase subunit J, chloroplastic from Physcomitrium patens (Spreading-leaved earth moss).